The primary structure comprises 273 residues: Glutamate racemase (273 aa).

Substrate-binding positions include 9-10 and 41-42; these read DS and YG. Cys73 acts as the Proton donor/acceptor in catalysis. Residue 74–75 participates in substrate binding; that stretch reads NT. Cys183 (proton donor/acceptor) is an active-site residue. Substrate is bound at residue 184–185; it reads TH.

The protein belongs to the aspartate/glutamate racemases family.

It carries out the reaction L-glutamate = D-glutamate. The protein operates within cell wall biogenesis; peptidoglycan biosynthesis. Its function is as follows. Provides the (R)-glutamate required for cell wall biosynthesis. The polypeptide is Glutamate racemase (Shewanella oneidensis (strain ATCC 700550 / JCM 31522 / CIP 106686 / LMG 19005 / NCIMB 14063 / MR-1)).